The chain runs to 576 residues: Small ribosomal subunit protein mS80 (rPPR6) (576 aa).

The N-terminal 76 residues, 1 to 76, are a transit peptide targeting the mitochondrion; the sequence is MLRSFLCRSQ…SLPADEIPIS (76 aa). 9 PPR repeats span residues 230-264, 265-299, 300-336, 341-370, 371-405, 406-440, 441-475, 476-510, and 511-546; these read NLEILNELIALFGKLGKSKAAFDVFSKTEEFGFTP, NAKTYYLTLEALCKRSFMDWACSVCEKMLKSGVLS, EGEQMGNIITWFCKEGKAEEAYSVYELAKTKEKSLPP, TLITALCKNDGTITFAQEMLGDLSGEARRR, GIKPFSDVIHSLCRMRNVKDAKALLLDMISKGPAP, GNAVFNLVVHACSKTGDLDEAKEVLKLMESRGLKP, DVYTYTVIISGYAKGGMMDEAQEILAEAKKKHKKL, SPVTYHALIRGYCKIEEYDEALKLLNEMDRFGVQP, and NADEYNKLIQSFCLKALDWEKAEVLFEEMKQKGLHL.

The protein belongs to the PPR family. P subfamily. Component of the mitochondrial ribosome small subunit.

Its subcellular location is the mitochondrion. In Arabidopsis thaliana (Mouse-ear cress), this protein is Small ribosomal subunit protein mS80 (rPPR6).